A 498-amino-acid chain; its full sequence is uncharacterized protein (498 aa).

Disordered stretches follow at residues 1–48 (MSND…ARPK), 99–134 (NDLH…GNSK), and 190–209 (NSEN…TSSN). Polar residues predominate over residues 35-44 (ELSTPKQVNQ). Basic and acidic residues predominate over residues 99–110 (NDLHPLDNDSTR). Residues 111–126 (TSKTLKNSSEVLTASK) show a composition bias toward polar residues.

This is an uncharacterized protein from Schizosaccharomyces pombe (strain 972 / ATCC 24843) (Fission yeast).